The sequence spans 238 residues: Uridylate kinase (238 aa).

12-15 (KLSG) lines the ATP pocket. Residue Gly-54 coordinates UMP. ATP is bound by residues Gly-55 and Arg-59. Residues Asp-74 and 135–142 (TGNPFFTT) each bind UMP. Residues Thr-162, Tyr-168, and Asp-171 each contribute to the ATP site.

The protein belongs to the UMP kinase family. Homohexamer.

The protein localises to the cytoplasm. The catalysed reaction is UMP + ATP = UDP + ADP. The protein operates within pyrimidine metabolism; CTP biosynthesis via de novo pathway; UDP from UMP (UMPK route): step 1/1. With respect to regulation, inhibited by UTP. In terms of biological role, catalyzes the reversible phosphorylation of UMP to UDP. This chain is Uridylate kinase, found in Dechloromonas aromatica (strain RCB).